A 259-amino-acid chain; its full sequence is Protein odd-skipped-related 1 (259 aa).

3 consecutive C2H2-type zinc fingers follow at residues 168-190, 196-218, and 224-246; these read FVCK…ERTH, YTCD…RYIH, and FKCQ…KTLH.

It belongs to the Odd C2H2-type zinc-finger protein family. In terms of tissue distribution, at early gastrula stage, expressed in the involuting mesoderm and endoderm. During neurulation, expressed in the pronephric primordium, following expression of osr2. During tailbud (stage 35), expressed in the rectal diverticulum and in the kidney ducts.

The protein localises to the nucleus. Its function is as follows. Transcriptional repressor. Required for pronephric kidney development. The chain is Protein odd-skipped-related 1 from Xenopus laevis (African clawed frog).